The sequence spans 482 residues: Catalase (482 aa).

Catalysis depends on residues His53 and Asn126. Tyr336 is a heme binding site.

Belongs to the catalase family. It depends on heme as a cofactor.

The protein localises to the periplasm. It carries out the reaction 2 H2O2 = O2 + 2 H2O. Its function is as follows. Decomposes hydrogen peroxide into water and oxygen; serves to protect cells from the toxic effects of hydrogen peroxide. Could protect cells in nodules which have a high potential to produce hydrogen peroxide because of the strong reducing conditions required for nitrogen fixation and the action of several proteins. This Aliivibrio fischeri (strain ATCC 700601 / ES114) (Vibrio fischeri) protein is Catalase (katA).